The chain runs to 354 residues: Rhodopsin (354 aa).

At 1-36 the chain is on the extracellular side; the sequence is MNGTEGPNFYIPMSNKTGVVRSPFDYPQYYLAEPWK. N-linked (GlcNAc...) (hybrid) asparagine glycosylation occurs at asparagine 2. Asparagine 15 carries an N-linked (GlcNAc...) asparagine glycan. Residues 37-61 form a helical membrane-spanning segment; it reads YSVLAAYMFLLILLGLPINFMTLYV. Topologically, residues 62–73 are cytoplasmic; it reads TIQHKKLRTPLN. A helical membrane pass occupies residues 74–96; it reads YILLNLGVCNHFMVLCGFTITMY. At 97 to 110 the chain is on the extracellular side; the sequence is TSLHGYFVFGQTGC. A disulfide bridge links cysteine 110 with cysteine 187. The helical transmembrane segment at 111 to 133 threads the bilayer; sequence YFEGFFATLGGEIALWSLVVLAI. Residues 134 to 136 carry the 'Ionic lock' involved in activated form stabilization motif; sequence ERY. Residues 134–152 lie on the Cytoplasmic side of the membrane; the sequence is ERYIVVCKPMSNFRFGENH. The helical transmembrane segment at 153 to 173 threads the bilayer; sequence AMMGVAFTWIMALACAVPPLF. Over 174–202 the chain is Extracellular; that stretch reads GWSRYIPEGMQCSCGVDYYTLKPEVNNES. A helical transmembrane segment spans residues 203 to 224; that stretch reads FVIYMFVVHFLIPLIIISFCYG. Over 225-252 the chain is Cytoplasmic; it reads RLVCTVKEAAAQQQESATTQKAEKEVTR. A helical transmembrane segment spans residues 253–274; the sequence is MVIIMVIFFLICWVPYAYVAFY. Residues 275–286 are Extracellular-facing; that stretch reads IFTHQGSEFGPI. A helical membrane pass occupies residues 287-308; the sequence is FMTVPAFFAKSSAIYNPVIYIM. Lysine 296 bears the N6-(retinylidene)lysine mark. Residues 309 to 354 are Cytoplasmic-facing; it reads LNKQFRNCMITTLCCGKNPFGDDDASSAATSKTEATSVSTSQVSPA. S-palmitoyl cysteine attachment occurs at residues cysteine 322 and cysteine 323. The tract at residues 332–354 is disordered; it reads DASSAATSKTEATSVSTSQVSPA. Positions 334–354 are enriched in low complexity; it reads SSAATSKTEATSVSTSQVSPA.

It belongs to the G-protein coupled receptor 1 family. Opsin subfamily. Contains one covalently linked retinal chromophore. Upon light absorption, the covalently bound 11-cis-retinal is converted to all-trans-retinal. After hydrolysis of the Schiff base and release of the covalently bound all-trans-retinal, active rhodopsin is regenerated by binding of a fresh molecule of 11-cis-retinal. Detected in retina rod photoreceptor cell outer segments (at protein level). Detected in retina.

It is found in the membrane. Its subcellular location is the cell projection. The protein resides in the cilium. The protein localises to the photoreceptor outer segment. Photoreceptor required for image-forming vision at low light intensity. Required for photoreceptor cell viability after birth. Light-induced isomerization of 11-cis to all-trans retinal triggers a conformational change that activates signaling via G-proteins. Subsequent receptor phosphorylation mediates displacement of the bound G-protein alpha subunit by arrestin and terminates signaling. The polypeptide is Rhodopsin (RHO) (Lithobates pipiens (Northern leopard frog)).